Here is a 325-residue protein sequence, read N- to C-terminus: MTDVSGKIRAWGRRLLVGAAAAAALPGLVGLAGGAATAGAFSRPGLPVEYLQVPSAAMGRSIKVQFQSGGDNSPAVYLLDGLRAQDDYNGWDINTPAFEWYYQSGLSVIMPVGGQSSFYSDWYSPACGKAGCTTYKWETFLTSELPQWLSANRSVKPTGSAAVGISMAGSSALILSVYHPQQFIYAGSLSALMDPSQGMGPSLIGLAMGDAGGYKASDMWGPSSDPAWQRNDPSLHIPELVANNTRLWIYCGNGTPSELGGANVPAEFLENFVRSSNLKFQDAYNAAGGHNAVFNLDANGTHSWEYWGAQLNAMKGDLQASLGAR.

The N-terminal stretch at 1–40 (MTDVSGKIRAWGRRLLVGAAAAAALPGLVGLAGGAATAGA) is a signal peptide. 82–83 (LR) serves as a coordination point for substrate. The interval 98-108 (FEWYYQSGLSV) is fibronectin-binding. A disulfide bond links C127 and C132. Residues S166 and D194 each coordinate substrate. The active-site Nucleophile is S166. Residue E270 is part of the active site. Residues 272–275 (FVRS), K279, and 302–304 (HSW) contribute to the substrate site. Residue H302 is part of the active site.

This sequence belongs to the mycobacterial A85 antigen family.

It is found in the secreted. It catalyses the reaction 2 alpha,alpha'-trehalose 6-mycolate = alpha,alpha'-trehalose 6,6'-bismycolate + alpha,alpha-trehalose. The enzyme catalyses an acyl-CoA + a 1,2-diacyl-sn-glycerol = a triacyl-sn-glycerol + CoA. The antigen 85 proteins (FbpA, FbpB, FbpC) are responsible for the high affinity of mycobacteria for fibronectin, a large adhesive glycoprotein, which facilitates the attachment of M.tuberculosis to murine alveolar macrophages (AMs). They also help to maintain the integrity of the cell wall by catalyzing the transfer of mycolic acids to cell wall arabinogalactan and through the synthesis of alpha,alpha-trehalose dimycolate (TDM, cord factor). They catalyze the transfer of a mycoloyl residue from one molecule of alpha,alpha-trehalose monomycolate (TMM) to another TMM, leading to the formation of TDM. This chain is Diacylglycerol acyltransferase/mycolyltransferase Ag85B (fbpB), found in Mycobacterium kansasii.